The primary structure comprises 229 residues: NAD(P)H-hydrate epimerase (229 aa).

The YjeF N-terminal domain maps to 9–216 (AISVDEELFN…KLEEKYAMNL (208 aa)). A (6S)-NADPHX-binding site is contributed by 59 to 63 (NNGGD). The K(+) site is built by asparagine 60 and aspartate 124. Residues 128 to 134 (GFSFKPP) and aspartate 157 contribute to the (6S)-NADPHX site. Position 160 (serine 160) interacts with K(+).

Belongs to the NnrE/AIBP family. K(+) serves as cofactor.

The enzyme catalyses (6R)-NADHX = (6S)-NADHX. The catalysed reaction is (6R)-NADPHX = (6S)-NADPHX. In terms of biological role, catalyzes the epimerization of the S- and R-forms of NAD(P)HX, a damaged form of NAD(P)H that is a result of enzymatic or heat-dependent hydration. This is a prerequisite for the S-specific NAD(P)H-hydrate dehydratase to allow the repair of both epimers of NAD(P)HX. The sequence is that of NAD(P)H-hydrate epimerase from Anopheles gambiae (African malaria mosquito).